A 705-amino-acid polypeptide reads, in one-letter code: DNA ligase (705 aa).

Residues 42–46, 91–92, and E125 each bind NAD(+); these read DADFD and SL. K127 (N6-AMP-lysine intermediate) is an active-site residue. Positions 148, 183, 299, and 323 each coordinate NAD(+). Zn(2+)-binding residues include C428, C431, C446, and C452. Residues 626 to 705 form the BRCT domain; sequence TDGSPVAGKT…DGWLALIEGL (80 aa).

Belongs to the NAD-dependent DNA ligase family. LigA subfamily. Mg(2+) is required as a cofactor. Requires Mn(2+) as cofactor.

It catalyses the reaction NAD(+) + (deoxyribonucleotide)n-3'-hydroxyl + 5'-phospho-(deoxyribonucleotide)m = (deoxyribonucleotide)n+m + AMP + beta-nicotinamide D-nucleotide.. In terms of biological role, DNA ligase that catalyzes the formation of phosphodiester linkages between 5'-phosphoryl and 3'-hydroxyl groups in double-stranded DNA using NAD as a coenzyme and as the energy source for the reaction. It is essential for DNA replication and repair of damaged DNA. This chain is DNA ligase, found in Roseobacter denitrificans (strain ATCC 33942 / OCh 114) (Erythrobacter sp. (strain OCh 114)).